The chain runs to 191 residues: MIEIPSDLHKDLVPLAFLLGNWAGAGVHDFPGSEKCNFGQEVSFTHDGRDFLEYHSHTWVLDADGNKVRPLETESGFWRVDAARKVEAVMTRDDGVVEIWYGELAAKKPQIDLVTDAVARTAAAGPYSGGKRLYGYVKSDLMWVGEKQTPEVELRPYMSAHLKKVVTPEDVERWAKALPDDMPDDGIAFFK.

The GXWXGXG signature appears at 20 to 26 (GNWAGAG).

The protein belongs to the nitrobindin family.

The polypeptide is Ferric nitrobindin-like protein (Streptomyces avermitilis (strain ATCC 31267 / DSM 46492 / JCM 5070 / NBRC 14893 / NCIMB 12804 / NRRL 8165 / MA-4680)).